A 44-amino-acid polypeptide reads, in one-letter code: Thymosin beta (44 aa).

The disordered stretch occupies residues 1–44; sequence MSDKHDKPDISEVTKFDKSKLKKTETHEKNPLPTKETIDQEKQG. Position 2 is an N-acetylserine (S2).

As to expression, expressed in regenerating axons.

The protein localises to the cytoplasm. The protein resides in the cytoskeleton. Plays an important role in the organization of the cytoskeleton. Binds to and sequesters actin monomers (G actin) and therefore inhibits actin polymerization. May be involved in the regulation of structural plasticity in the CNS. This chain is Thymosin beta, found in Aplysia californica (California sea hare).